The sequence spans 501 residues: Putative ribose/galactose/methyl galactoside import ATP-binding protein 1 (501 aa).

ABC transporter domains lie at 5–237 and 249–492; these read VSLS…VGRQ and VPGE…MTRS. 37–44 provides a ligand contact to ATP; sequence GENGAGKS.

It belongs to the ABC transporter superfamily. Carbohydrate importer 2 (CUT2) (TC 3.A.1.2) family.

Its subcellular location is the cell inner membrane. It carries out the reaction D-ribose(out) + ATP + H2O = D-ribose(in) + ADP + phosphate + H(+). The catalysed reaction is D-galactose(out) + ATP + H2O = D-galactose(in) + ADP + phosphate + H(+). In terms of biological role, part of an ABC transporter complex involved in carbohydrate import. Could be involved in ribose, galactose and/or methyl galactoside import. Responsible for energy coupling to the transport system. The polypeptide is Putative ribose/galactose/methyl galactoside import ATP-binding protein 1 (Rhizobium meliloti (strain 1021) (Ensifer meliloti)).